The primary structure comprises 189 residues: Hypoxanthine/guanine phosphoribosyltransferase (189 aa).

It belongs to the purine/pyrimidine phosphoribosyltransferase family. Archaeal HPRT subfamily. Homodimer.

It is found in the cytoplasm. The catalysed reaction is IMP + diphosphate = hypoxanthine + 5-phospho-alpha-D-ribose 1-diphosphate. It carries out the reaction GMP + diphosphate = guanine + 5-phospho-alpha-D-ribose 1-diphosphate. It functions in the pathway purine metabolism; IMP biosynthesis via salvage pathway; IMP from hypoxanthine: step 1/1. Its function is as follows. Catalyzes a salvage reaction resulting in the formation of IMP that is energically less costly than de novo synthesis. In Methanosarcina acetivorans (strain ATCC 35395 / DSM 2834 / JCM 12185 / C2A), this protein is Hypoxanthine/guanine phosphoribosyltransferase (hpt).